A 707-amino-acid polypeptide reads, in one-letter code: Protein kinase C theta type (707 aa).

One can recognise a C2 domain in the interval 1-107 (MSPFLRIGLS…KNNGRTEIWL (107 aa)). Tyr-90 bears the Phosphotyrosine; by LCK mark. The segment at 159–209 (CHEFTATFFPQPTFCSVCHEFVWGLNKQGYQCRRCNAAIHKKCIDKVIAKC) adopts a Phorbol-ester/DAG-type 1 zinc-finger fold. Residue Thr-219 is modified to Phosphothreonine; by autocatalysis. A Phorbol-ester/DAG-type 2 zinc finger spans residues 231 to 281 (PHRFKVYNYKSPTFCEHCGTLLWGLARQGLKCDACGMNVHHRCQTKVANLC). Phosphoserine is present on Ser-348. A Protein kinase domain is found at 380–634 (FILHKMLGKG…RGDIRQHPLF (255 aa)). ATP is bound by residues 386 to 394 (LGKGSFGKV) and Lys-409. The active-site Proton acceptor is the Asp-504. Residue Thr-538 is modified to Phosphothreonine; by PDPK1. In terms of domain architecture, AGC-kinase C-terminal spans 635 to 706 (REINWEELER…INPGMETLIC (72 aa)). Residues Ser-676 and Ser-685 each carry the phosphoserine modification. At Ser-695 the chain carries Phosphoserine; by autocatalysis.

It belongs to the protein kinase superfamily. AGC Ser/Thr protein kinase family. PKC subfamily. As to quaternary structure, part of a membrane raft complex composed at least of BCL10, CARD11, MALT1 and IKBKB. Interacts with GLRX3 (via N-terminus). Interacts with ECT2. Interacts with CCDC88A/GIV; the interaction leads to phosphorylation of CCDC88A and inhibition of its guanine nucleotide exchange factor activity. Interacts with CD28. Requires Mg(2+) as cofactor. In terms of processing, autophosphorylation at Thr-219 is required for targeting to the TCR and cellular function of PRKCQ upon antigen receptor ligation. Following TCR stimulation, phosphorylated at Tyr-90 and Ser-685.

It is found in the cytoplasm. The protein localises to the cell membrane. The catalysed reaction is L-seryl-[protein] + ATP = O-phospho-L-seryl-[protein] + ADP + H(+). It carries out the reaction L-threonyl-[protein] + ATP = O-phospho-L-threonyl-[protein] + ADP + H(+). Novel PKCs (PRKCD, PRKCE, PRKCH and PRKCQ) are calcium-insensitive, but activated by diacylglycerol (DAG) and phosphatidylserine. Three specific sites; Thr-538 (activation loop of the kinase domain), Ser-676 (turn motif) and Ser-695 (hydrophobic region), need to be phosphorylated for its full activation. Functionally, calcium-independent, phospholipid- and diacylglycerol (DAG)-dependent serine/threonine-protein kinase that mediates non-redundant functions in T-cell receptor (TCR) signaling, including T-cells activation, proliferation, differentiation and survival, by mediating activation of multiple transcription factors such as NF-kappa-B, JUN, NFATC1 and NFATC2. In TCR-CD3/CD28-co-stimulated T-cells, is required for the activation of NF-kappa-B and JUN, which in turn are essential for IL2 production, and participates in the calcium-dependent NFATC1 and NFATC2 transactivation. Mediates the activation of the canonical NF-kappa-B pathway (NFKB1) by direct phosphorylation of CARD11 on several serine residues, inducing CARD11 association with lipid rafts and recruitment of the BCL10-MALT1 complex, which then activates IKK complex, resulting in nuclear translocation and activation of NFKB1. May also play an indirect role in activation of the non-canonical NF-kappa-B (NFKB2) pathway. In the signaling pathway leading to JUN activation, acts by phosphorylating the mediator STK39/SPAK and may not act through MAP kinases signaling. Plays a critical role in TCR/CD28-induced NFATC1 and NFATC2 transactivation by participating in the regulation of reduced inositol 1,4,5-trisphosphate generation and intracellular calcium mobilization. After costimulation of T-cells through CD28 can phosphorylate CBLB and is required for the ubiquitination and subsequent degradation of CBLB, which is a prerequisite for the activation of TCR. During T-cells differentiation, plays an important role in the development of T-helper 2 (Th2) cells following immune and inflammatory responses, and, in the development of inflammatory autoimmune diseases, is necessary for the activation of IL17-producing Th17 cells. May play a minor role in Th1 response. Upon TCR stimulation, mediates T-cell protective survival signal by phosphorylating BAD, thus protecting T-cells from BAD-induced apoptosis, and by up-regulating BCL-X(L)/BCL2L1 levels through NF-kappa-B and JUN pathways. In platelets, regulates signal transduction downstream of the ITGA2B, CD36/GP4, F2R/PAR1 and F2RL3/PAR4 receptors, playing a positive role in 'outside-in' signaling and granule secretion signal transduction. May relay signals from the activated ITGA2B receptor by regulating the uncoupling of WASP and WIPF1, thereby permitting the regulation of actin filament nucleation and branching activity of the Arp2/3 complex. May mediate inhibitory effects of free fatty acids on insulin signaling by phosphorylating IRS1, which in turn blocks IRS1 tyrosine phosphorylation and downstream activation of the PI3K/AKT pathway. Phosphorylates MSN (moesin) in the presence of phosphatidylglycerol or phosphatidylinositol. Phosphorylates PDPK1 at 'Ser-504' and 'Ser-532' and negatively regulates its ability to phosphorylate PKB/AKT1. Phosphorylates CCDC88A/GIV and inhibits its guanine nucleotide exchange factor activity. Phosphorylates and activates LRRK1, which phosphorylates RAB proteins involved in intracellular trafficking. This is Protein kinase C theta type (Prkcq) from Rattus norvegicus (Rat).